Consider the following 1143-residue polypeptide: Condensin-2 complex subunit G2 (1143 aa).

Ser-30 is modified (phosphoserine). An HEAT repeat occupies 460 to 498; the sequence is LLPALRYSLHDNSEKVRVAFVDMLLKIKAVRAAKFWKIC. Phosphothreonine occurs at positions 805 and 1119.

As to quaternary structure, component of the condensin-2 complex, which contains the SMC2 and SMC4 heterodimer, and 3 non SMC subunits that probably regulate the complex: NCAPH2, NCAPD3 and NCAPG2.

Its subcellular location is the nucleus. In terms of biological role, regulatory subunit of the condensin-2 complex, a complex which establishes mitotic chromosome architecture and is involved in physical rigidity of the chromatid axis. The protein is Condensin-2 complex subunit G2 (NCAPG2) of Homo sapiens (Human).